The chain runs to 390 residues: Imidazolonepropionase (390 aa).

Fe(3+)-binding residues include His71 and His73. Zn(2+) contacts are provided by His71 and His73. The 4-imidazolone-5-propanoate site is built by Arg80, Tyr138, and His165. Tyr138 provides a ligand contact to N-formimidoyl-L-glutamate. Residue His228 coordinates Fe(3+). A Zn(2+)-binding site is contributed by His228. Gln231 provides a ligand contact to 4-imidazolone-5-propanoate. Asp302 serves as a coordination point for Fe(3+). Asp302 provides a ligand contact to Zn(2+). Positions 304 and 306 each coordinate N-formimidoyl-L-glutamate. Position 307 (Ser307) interacts with 4-imidazolone-5-propanoate.

Belongs to the metallo-dependent hydrolases superfamily. HutI family. The cofactor is Zn(2+). Fe(3+) serves as cofactor.

It is found in the cytoplasm. It catalyses the reaction 4-imidazolone-5-propanoate + H2O = N-formimidoyl-L-glutamate. Its pathway is amino-acid degradation; L-histidine degradation into L-glutamate; N-formimidoyl-L-glutamate from L-histidine: step 3/3. In terms of biological role, catalyzes the hydrolytic cleavage of the carbon-nitrogen bond in imidazolone-5-propanoate to yield N-formimidoyl-L-glutamate. It is the third step in the universal histidine degradation pathway. This is Imidazolonepropionase from Streptomyces griseus subsp. griseus (strain JCM 4626 / CBS 651.72 / NBRC 13350 / KCC S-0626 / ISP 5235).